The sequence spans 192 residues: Neurogenic differentiation factor 1 (192 aa).

The bHLH domain occupies 19–71; sequence VRRVKANGRERARMHGLNNALDMLREYIPITTQHQKLSKIETLRLARNYIDAL. Positions 116 to 192 are disordered; it reads PSQFDIFSDP…SHQNTFNYSP (77 aa). The segment covering 139–163 has biased composition (low complexity); the sequence is SSFSSSSPSSSCSPPQYYYSPTQPS.

As to expression, expressed in neuroblasts of the AB lineage. More specifically in precursors of the embryonic ventral cord motor neurons. Expressed to a lesser degree in the EMS lineage which generates mostly endoderm and mesoderm tissues.

It localises to the nucleus. In terms of biological role, acts as a transcriptional regulator whose activity is required for several aspects of motor neuron fate specification, including cell division patterns, proper spatiotemporal expression of fate-specific markers, and normal axonal morphology and pathfinding. Involved in regulating glial specification. This chain is Neurogenic differentiation factor 1 (cnd-1), found in Caenorhabditis elegans.